We begin with the raw amino-acid sequence, 236 residues long: DNA repair protein RecO (236 aa).

This sequence belongs to the RecO family.

In terms of biological role, involved in DNA repair and RecF pathway recombination. The polypeptide is DNA repair protein RecO (Rickettsia typhi (strain ATCC VR-144 / Wilmington)).